Here is a 423-residue protein sequence, read N- to C-terminus: Maintenance of mitochondrial morphology protein 1 (423 aa).

The Lumenal portion of the chain corresponds to 1-20 (MTIPAPIPDKAESSLSFTQG). Residues 21–41 (LLLGQLSIVILIGAFIKFFIF) traverse the membrane as a helical segment. Residues 42 to 423 (GDPPSPDVTA…PGSMPGLSMT (382 aa)) lie on the Cytoplasmic side of the membrane. Residues 115-327 (QPESLDWFNV…EPRFQQIELP (213 aa)) enclose the SMP-LTD domain. Disordered stretches follow at residues 332 to 372 (RKKN…KEVE) and 387 to 423 (SLDVPDEGSEDGLRFRRKSKGRDEYAMPGSMPGLSMT). Positions 355 to 372 (RSRDVERDLREEARKEVE) are enriched in basic and acidic residues.

This sequence belongs to the MMM1 family. In terms of assembly, homodimer. Component of the ER-mitochondria encounter structure (ERMES) or MDM complex, composed of MMM1, MDM10, MDM12 and MDM34. An MMM1 homodimer associates with one molecule of MDM12 on each side in a pairwise head-to-tail manner, and the SMP-LTD domains of MMM1 and MDM12 generate a continuous hydrophobic tunnel for phospholipid trafficking.

Its subcellular location is the endoplasmic reticulum membrane. Component of the ERMES/MDM complex, which serves as a molecular tether to connect the endoplasmic reticulum (ER) and mitochondria. Components of this complex are involved in the control of mitochondrial shape and protein biogenesis, and function in nonvesicular lipid trafficking between the ER and mitochondria. The MDM12-MMM1 subcomplex functions in the major beta-barrel assembly pathway that is responsible for biogenesis of all outer membrane beta-barrel proteins, and acts in a late step after the SAM complex. The MDM10-MDM12-MMM1 subcomplex further acts in the TOM40-specific pathway after the action of the MDM12-MMM1 complex. Essential for establishing and maintaining the structure of mitochondria and maintenance of mtDNA nucleoids. The polypeptide is Maintenance of mitochondrial morphology protein 1 (Botryotinia fuckeliana (strain B05.10) (Noble rot fungus)).